Reading from the N-terminus, the 419-residue chain is MAHTLAQKILQRHTDEAITDAGQIVRCRVSMVLANDITAPLAIKSFRAMGAKRVFDKDRVALVMDHFTPQKDIEAAQQVKLTREFAREMGVTHYYEGGDCGVEHALLPELGLVGPGDVVVGADSHTCTYGGLGAFATGLGSTDVAGAMALGETWFKVPPTIRATFTGTLPAYVGAKDLILTLIGAIGVDGALYRALEFDGAAIEALDVEGRMTMANMAIEAGGKAGLFAADAKTLTYCTTAGRTGDTAFSADAGAVYERELSFDVTGMTPVVACPHLPDNVKPVSEVKDVTVQQVVIGSCTNGRIGDLREAAAVLRGRKVSRDVRCIVLPATPGIWRQALREGLIETFMEAGCIVGPATCGPCLGGHMGILADGERAIATTNRNFKGRMGSLESEVYLSGPATAAASAVTGVITDPSTL.

3 residues coordinate [4Fe-4S] cluster: Cys300, Cys360, and Cys363.

The protein belongs to the aconitase/IPM isomerase family. LeuC type 2 subfamily. Heterodimer of LeuC and LeuD. The cofactor is [4Fe-4S] cluster.

The enzyme catalyses (2R,3S)-3-isopropylmalate = (2S)-2-isopropylmalate. The protein operates within amino-acid biosynthesis; L-leucine biosynthesis; L-leucine from 3-methyl-2-oxobutanoate: step 2/4. Functionally, catalyzes the isomerization between 2-isopropylmalate and 3-isopropylmalate, via the formation of 2-isopropylmaleate. In Nitratidesulfovibrio vulgaris (strain ATCC 29579 / DSM 644 / CCUG 34227 / NCIMB 8303 / VKM B-1760 / Hildenborough) (Desulfovibrio vulgaris), this protein is 3-isopropylmalate dehydratase large subunit.